The chain runs to 193 residues: Large ribosomal subunit protein bL25 (193 aa).

This sequence belongs to the bacterial ribosomal protein bL25 family. CTC subfamily. As to quaternary structure, part of the 50S ribosomal subunit; part of the 5S rRNA/L5/L18/L25 subcomplex. Contacts the 5S rRNA. Binds to the 5S rRNA independently of L5 and L18.

Functionally, this is one of the proteins that binds to the 5S RNA in the ribosome where it forms part of the central protuberance. The sequence is that of Large ribosomal subunit protein bL25 from Clostridium tetani (strain Massachusetts / E88).